An 81-amino-acid polypeptide reads, in one-letter code: MAVKIRLRRMGAKKAPFYRIIVADSRAPRDGKFIDEIGYYNPLTEPVEVKINEEKANEWLSNGAQPTEVVKRLFNNAGLTK.

The protein belongs to the bacterial ribosomal protein bS16 family.

This is Small ribosomal subunit protein bS16 from Clostridium beijerinckii (strain ATCC 51743 / NCIMB 8052) (Clostridium acetobutylicum).